The chain runs to 390 residues: Formate-dependent phosphoribosylglycinamide formyltransferase (390 aa).

Residues 18–19 and Glu-78 each bind N(1)-(5-phospho-beta-D-ribosyl)glycinamide; that span reads EL. Residues Arg-110, Lys-151, 156–161, 191–194, and Glu-199 each bind ATP; these read SSGKGQ and EEFL. An ATP-grasp domain is found at 115–305; the sequence is DLASKELNIK…EFELHLRAFL (191 aa). The Mg(2+) site is built by Glu-264 and Glu-276. N(1)-(5-phospho-beta-D-ribosyl)glycinamide-binding positions include Asp-283, Lys-353, and 360 to 361; that span reads RR.

It belongs to the PurK/PurT family. As to quaternary structure, homodimer.

It carries out the reaction N(1)-(5-phospho-beta-D-ribosyl)glycinamide + formate + ATP = N(2)-formyl-N(1)-(5-phospho-beta-D-ribosyl)glycinamide + ADP + phosphate + H(+). Its pathway is purine metabolism; IMP biosynthesis via de novo pathway; N(2)-formyl-N(1)-(5-phospho-D-ribosyl)glycinamide from N(1)-(5-phospho-D-ribosyl)glycinamide (formate route): step 1/1. In terms of biological role, involved in the de novo purine biosynthesis. Catalyzes the transfer of formate to 5-phospho-ribosyl-glycinamide (GAR), producing 5-phospho-ribosyl-N-formylglycinamide (FGAR). Formate is provided by PurU via hydrolysis of 10-formyl-tetrahydrofolate. The polypeptide is Formate-dependent phosphoribosylglycinamide formyltransferase (Prochlorococcus marinus (strain MIT 9515)).